Here is a 772-residue protein sequence, read N- to C-terminus: DNA ligase (772 aa).

Residues Asp80–Asp84, Ser130–Leu131, and Glu160 each bind NAD(+). Residue Lys162 is the N6-AMP-lysine intermediate of the active site. NAD(+) contacts are provided by Arg183, Glu220, Lys336, and Lys360. The Zn(2+) site is built by Cys454, Cys457, Cys473, and Cys479. Residues Ala685–Gly772 enclose the BRCT domain.

This sequence belongs to the NAD-dependent DNA ligase family. LigA subfamily. The cofactor is Mg(2+). It depends on Mn(2+) as a cofactor.

The catalysed reaction is NAD(+) + (deoxyribonucleotide)n-3'-hydroxyl + 5'-phospho-(deoxyribonucleotide)m = (deoxyribonucleotide)n+m + AMP + beta-nicotinamide D-nucleotide.. Functionally, DNA ligase that catalyzes the formation of phosphodiester linkages between 5'-phosphoryl and 3'-hydroxyl groups in double-stranded DNA using NAD as a coenzyme and as the energy source for the reaction. It is essential for DNA replication and repair of damaged DNA. This chain is DNA ligase, found in Cutibacterium acnes (strain DSM 16379 / KPA171202) (Propionibacterium acnes).